The chain runs to 346 residues: Annexin A1 (346 aa).

Residue alanine 2 is modified to N-acetylalanine. At serine 5 the chain carries Phosphoserine; by TRPM7. Glutamine 19 is covalently cross-linked (Isoglutamyl lysine isopeptide (Gln-Lys) (interchain with K-?)). Phosphotyrosine; by EGFR is present on tyrosine 21. Position 27 is a phosphoserine; by PKC (serine 27). Phosphoserine is present on residues serine 34 and serine 37. Threonine 41 carries the phosphothreonine modification. Annexin repeat units lie at residues 42–113 (FNPS…ALLK), 114–185 (TPAQ…SLAK), 197–269 (DLAD…AIVK), and 273–344 (SKPA…ALCG). Lysine 58 is subject to N6-acetyllysine. Residues glycine 59, valine 60, glutamate 62, lysine 97, leucine 100, glutamate 105, methionine 127, glycine 129, glycine 131, threonine 132, and glutamate 134 each contribute to the Ca(2+) site. At threonine 136 the chain carries Phosphothreonine. The Ca(2+) site is built by aspartate 171, glycine 210, and arginine 213. Residue lysine 214 forms a Glycyl lysine isopeptide (Lys-Gly) (interchain with G-Cter in SUMO1); alternate linkage. Lysine 214 is covalently cross-linked (Glycyl lysine isopeptide (Lys-Gly) (interchain with G-Cter in SUMO2); alternate). Residue glycine 215 coordinates Ca(2+). N6-acetyllysine is present on lysine 239. Residues aspartate 253, glutamate 255, and leucine 256 each contribute to the Ca(2+) site. A Glycyl lysine isopeptide (Lys-Gly) (interchain with G-Cter in SUMO1) cross-link involves residue lysine 257. Ca(2+) is bound by residues glutamate 261, methionine 286, glycine 288, and glycine 290. N6-acetyllysine is present on lysine 312. The cysteines at positions 324 and 343 are disulfide-linked. Ca(2+) is bound by residues leucine 328, glutamate 330, and threonine 331. A Glycyl lysine isopeptide (Lys-Gly) (interchain with G-Cter in SUMO1) cross-link involves residue lysine 332. Glutamate 336 is a Ca(2+) binding site.

It belongs to the annexin family. Homodimer; non-covalently linked. Homodimer; linked by transglutamylation. Homodimers linked by transglutamylation are observed in placenta, but not in other tissues. Interacts with S100A11. Heterotetramer, formed by two molecules each of S100A11 and ANXA1. Interacts with DYSF. Interacts with EGFR. Post-translationally, phosphorylated by protein kinase C, EGFR and TRPM7. Phosphorylated in response to EGF treatment. In terms of processing, sumoylated. Proteolytically cleaved by cathepsin CTSG to release the active N-terminal peptide Ac2-26.

The protein localises to the nucleus. It is found in the cytoplasm. Its subcellular location is the cell projection. The protein resides in the cilium. It localises to the basolateral cell membrane. The protein localises to the lateral cell membrane. It is found in the cell membrane. Its subcellular location is the apical cell membrane. The protein resides in the membrane. It localises to the early endosome. The protein localises to the cytoplasmic vesicle membrane. It is found in the endosome membrane. Its subcellular location is the secreted. The protein resides in the extracellular space. It localises to the extracellular exosome. The protein localises to the cytoplasmic vesicle. It is found in the secretory vesicle lumen. Its subcellular location is the phagocytic cup. Functionally, plays important roles in the innate immune response as effector of glucocorticoid-mediated responses and regulator of the inflammatory process. Has anti-inflammatory activity. Plays a role in glucocorticoid-mediated down-regulation of the early phase of the inflammatory response. Contributes to the adaptive immune response by enhancing signaling cascades that are triggered by T-cell activation, regulates differentiation and proliferation of activated T-cells. Promotes the differentiation of T-cells into Th1 cells and negatively regulates differentiation into Th2 cells. Has no effect on unstimulated T-cells. Negatively regulates hormone exocytosis via activation of the formyl peptide receptors and reorganization of the actin cytoskeleton. Has high affinity for Ca(2+) and can bind up to eight Ca(2+) ions. Displays Ca(2+)-dependent binding to phospholipid membranes. Plays a role in the formation of phagocytic cups and phagosomes. Plays a role in phagocytosis by mediating the Ca(2+)-dependent interaction between phagosomes and the actin cytoskeleton. In terms of biological role, functions at least in part by activating the formyl peptide receptors and downstream signaling cascades. Promotes chemotaxis of granulocytes and monocytes via activation of the formyl peptide receptors. Promotes rearrangement of the actin cytoskeleton, cell polarization and cell migration. Promotes resolution of inflammation and wound healing. Acts via neutrophil N-formyl peptide receptors to enhance the release of CXCL2. The sequence is that of Annexin A1 (ANXA1) from Pan troglodytes (Chimpanzee).